A 683-amino-acid polypeptide reads, in one-letter code: MSALNSLPLPVVRLLAFFHEELSERRPGRVPQTVQLWVGCLLVILISMTFEIPFVALSLAVLFYGIQSNAFYTKFVAILFVVATVLEIGSLFLIYKWSYGEPLIRLIIAGPILMGCMFLMRTHRLGLVFFAVAIVAIYGQTFPAMLDYPEVVVRLTLWCIVVGLYPTLLMTLIGVLWFPSRAISQMHQALNDRLDDAISHLTDSLAPLPETRIEREALALQKLNVFCLADDANWRTQSAWWQSCVATVTYIYSTLNRYDPTSFADSQAIIEFRQKLASEINKLQHAITEGQCWQSDWRISESEAMAARECNLENICQTLLQLGQMDPNTPPTPAAKPPSMVADAFTNPDYMRYAVKTLLACLICYTFYSGVDWEGIHTCMLTCVIVANPNVGSSYQKMVLRFGGAFCGAILALLFTLLVMPWLDNIVELLFVLAPIFLLGAWIATSSERSSYIGTQMVVTFALATLENVFGPVYDLVEIRDRALGIIIGTVVSAVIYTFVWPESEARTLPQKLAGALGMLSKVMRIPRQQEVTALRTYLQIRIGLHAAFNACEEMCQRVALERQLDSEERALLIERSQTVIHQGRDLLHAWDATWNSAQALDNALQPDKAGQFADALEKYAAGLATALSRSPQITLEETPASQAILPTLLKQEQHVCQLFARLPDWTAPALTPATEQAQGATQ.

9 consecutive transmembrane segments (helical) span residues 43–63 (VILI…AVLF), 75–95 (FVAI…FLIY), 100–120 (GEPL…MFLM), 125–145 (LGLV…FPAM), 158–178 (WCIV…VLWF), 402–422 (FGGA…VMPW), 426–446 (IVEL…IATS), 457–477 (MVVT…YDLV), and 483–503 (ALGI…VWPE).

It belongs to the MdtO family. Could be part of a tripartite efflux system composed of MdtN, MdtO and MdtP.

Its subcellular location is the cell inner membrane. Its function is as follows. Could be involved in resistance to puromycin, acriflavine and tetraphenylarsonium chloride. This Escherichia coli O157:H7 protein is Multidrug resistance protein MdtO (mdtO).